Here is a 151-residue protein sequence, read N- to C-terminus: S-ribosylhomocysteine lyase (151 aa).

Residues His54, His58, and Cys121 each coordinate Fe cation.

It belongs to the LuxS family. Homodimer. The cofactor is Fe cation.

The catalysed reaction is S-(5-deoxy-D-ribos-5-yl)-L-homocysteine = (S)-4,5-dihydroxypentane-2,3-dione + L-homocysteine. Involved in the synthesis of autoinducer 2 (AI-2) which is secreted by bacteria and is used to communicate both the cell density and the metabolic potential of the environment. The regulation of gene expression in response to changes in cell density is called quorum sensing. Catalyzes the transformation of S-ribosylhomocysteine (RHC) to homocysteine (HC) and 4,5-dihydroxy-2,3-pentadione (DPD). This is S-ribosylhomocysteine lyase from Clostridium perfringens (strain ATCC 13124 / DSM 756 / JCM 1290 / NCIMB 6125 / NCTC 8237 / Type A).